Reading from the N-terminus, the 49-residue chain is Large ribosomal subunit protein bL33A (49 aa).

It belongs to the bacterial ribosomal protein bL33 family.

This Staphylococcus aureus (strain COL) protein is Large ribosomal subunit protein bL33A.